The primary structure comprises 100 residues: Defensin-like protein 316 (100 aa).

The signal sequence occupies residues 1-18; the sequence is MASHIICYIFCIIKLSCA. Intrachain disulfides connect cysteine 21/cysteine 84, cysteine 43/cysteine 64, and cysteine 53/cysteine 76.

It belongs to the DEFL family.

The protein resides in the secreted. The polypeptide is Defensin-like protein 316 (Arabidopsis thaliana (Mouse-ear cress)).